We begin with the raw amino-acid sequence, 43 residues long: Protein PsbN (43 aa).

A helical membrane pass occupies residues 4–24 (GILIVIFISCLLVSFTGYAVY).

The protein belongs to the PsbN family.

It localises to the plastid. It is found in the chloroplast thylakoid membrane. May play a role in photosystem I and II biogenesis. The polypeptide is Protein PsbN (Coleochaete orbicularis (Charophycean green alga)).